A 295-amino-acid polypeptide reads, in one-letter code: Ribosomal protein L11 methyltransferase (295 aa).

4 residues coordinate S-adenosyl-L-methionine: Thr150, Gly171, Asp193, and Asn232.

Belongs to the methyltransferase superfamily. PrmA family.

The protein resides in the cytoplasm. The enzyme catalyses L-lysyl-[protein] + 3 S-adenosyl-L-methionine = N(6),N(6),N(6)-trimethyl-L-lysyl-[protein] + 3 S-adenosyl-L-homocysteine + 3 H(+). Its function is as follows. Methylates ribosomal protein L11. This is Ribosomal protein L11 methyltransferase from Neisseria meningitidis serogroup A / serotype 4A (strain DSM 15465 / Z2491).